The chain runs to 341 residues: Fructose-1,6-bisphosphatase, cytosolic (341 aa).

5 residues coordinate Mg(2+): Glu-71, Glu-100, Asp-121, Leu-123, and Asp-124. Substrate-binding positions include 124–127 (DGCS), Asn-215, Tyr-247, Tyr-267, and Lys-277. Glu-283 serves as a coordination point for Mg(2+).

Belongs to the FBPase class 1 family. The cofactor is Mg(2+).

Its subcellular location is the cytoplasm. The catalysed reaction is beta-D-fructose 1,6-bisphosphate + H2O = beta-D-fructose 6-phosphate + phosphate. The protein is Fructose-1,6-bisphosphatase, cytosolic of Beta vulgaris (Sugar beet).